The following is a 347-amino-acid chain: tRNA N6-adenosine threonylcarbamoyltransferase (347 aa).

Fe cation-binding residues include H111 and H115. Substrate is bound by residues 134 to 138 (LISGG), D167, G180, and N277. D305 serves as a coordination point for Fe cation.

It belongs to the KAE1 / TsaD family. The cofactor is Fe(2+).

It is found in the cytoplasm. The enzyme catalyses L-threonylcarbamoyladenylate + adenosine(37) in tRNA = N(6)-L-threonylcarbamoyladenosine(37) in tRNA + AMP + H(+). Its function is as follows. Required for the formation of a threonylcarbamoyl group on adenosine at position 37 (t(6)A37) in tRNAs that read codons beginning with adenine. Is involved in the transfer of the threonylcarbamoyl moiety of threonylcarbamoyl-AMP (TC-AMP) to the N6 group of A37, together with TsaE and TsaB. TsaD likely plays a direct catalytic role in this reaction. The polypeptide is tRNA N6-adenosine threonylcarbamoyltransferase (Actinobacillus pleuropneumoniae serotype 5b (strain L20)).